Here is a 23-residue protein sequence, read N- to C-terminus: Nephrotoxin PsTX-115 (23 aa).

Its subcellular location is the secreted. It is found in the nematocyst. In terms of biological role, nephrotoxin. When injected intravenously in rats, causes severe destructive glomerular changes. At 24 hours post-injection partial disruption of the glomerular basement membrane, massive thrombus formation in glomerular capillaries, severe mesangiolysis and infiltrating cells were observed in the majority of glomeruli. This chain is Nephrotoxin PsTX-115, found in Phyllodiscus semoni (Night anemone).